Reading from the N-terminus, the 293-residue chain is Energy-coupling factor transporter ATP-binding protein EcfA2 (293 aa).

One can recognise an ABC transporter domain in the interval 3-246 (ITFQKVEHRY…ADELEKIGVD (244 aa)). Residue 40–47 (GHTGSGKS) coordinates ATP.

It belongs to the ABC transporter superfamily. Energy-coupling factor EcfA family. As to quaternary structure, forms a stable energy-coupling factor (ECF) transporter complex composed of 2 membrane-embedded substrate-binding proteins (S component), 2 ATP-binding proteins (A component) and 2 transmembrane proteins (T component).

The protein localises to the cell membrane. Its function is as follows. ATP-binding (A) component of a common energy-coupling factor (ECF) ABC-transporter complex. Unlike classic ABC transporters this ECF transporter provides the energy necessary to transport a number of different substrates. This is Energy-coupling factor transporter ATP-binding protein EcfA2 from Bacillus cereus (strain ATCC 10987 / NRS 248).